Reading from the N-terminus, the 128-residue chain is Holo-[acyl-carrier-protein] synthase (128 aa).

Mg(2+)-binding residues include Asp9 and Glu60.

Belongs to the P-Pant transferase superfamily. AcpS family. The cofactor is Mg(2+).

The protein resides in the cytoplasm. It carries out the reaction apo-[ACP] + CoA = holo-[ACP] + adenosine 3',5'-bisphosphate + H(+). Transfers the 4'-phosphopantetheine moiety from coenzyme A to a Ser of acyl-carrier-protein. The protein is Holo-[acyl-carrier-protein] synthase of Buchnera aphidicola subsp. Baizongia pistaciae (strain Bp).